The primary structure comprises 55 residues: Large ribosomal subunit protein bL33 (55 aa).

This sequence belongs to the bacterial ribosomal protein bL33 family.

This Nitrobacter hamburgensis (strain DSM 10229 / NCIMB 13809 / X14) protein is Large ribosomal subunit protein bL33 (rpmG).